Consider the following 393-residue polypeptide: Na(+)/H(+) antiporter NhaA (393 aa).

A run of 11 helical transmembrane segments spans residues 14–34 (AAGMMLMMATVLAIALANWSV), 60–80 (LLLWINDALMAIFFLLIGLEV), 96–116 (MLPLAAAVGGMVFPALLFLLF), 125–145 (AGWAIPAATDIAFAIGVLTLL), 155–175 (VFLLALAIIDDLGAILIIALF), 179–199 (QVFWPALAGAVLAIAVLAYMN), 218–238 (VCILKCGVHATLAGVIVGFFI), 263–283 (FLIVPLFAFANAGIVLQGIVL), 292–312 (LGIAAGLLLGKPLGITLFSWL), 330–350 (IVAVSVLCGIGFTMSIFITLL), and 362–382 (YAKLGILLASGLAALLGYLAL).

Belongs to the NhaA Na(+)/H(+) (TC 2.A.33) antiporter family.

The protein localises to the cell inner membrane. It catalyses the reaction Na(+)(in) + 2 H(+)(out) = Na(+)(out) + 2 H(+)(in). Na(+)/H(+) antiporter that extrudes sodium in exchange for external protons. The polypeptide is Na(+)/H(+) antiporter NhaA (Pectobacterium atrosepticum (strain SCRI 1043 / ATCC BAA-672) (Erwinia carotovora subsp. atroseptica)).